We begin with the raw amino-acid sequence, 822 residues long: Serine/threonine-protein phosphatase 4 regulatory subunit 3 (822 aa).

The region spanning 1–100 (MTDTRRRVKV…DEIWEKICQV (100 aa)) is the WH1 domain. Positions 744-822 (TSQLSASGHP…PLTKKARLGS (79 aa)) are disordered. The segment covering 761-774 (SPGSPESPGSVSKS) has biased composition (low complexity). Residues 793-808 (YPDDDEEDDDNDEEEK) are compositionally biased toward acidic residues.

The protein belongs to the SMEK family. Serine/threonine-protein phosphatase 4 (PP4) occurs in different assemblies of the catalytic and one or more regulatory subunits.

Regulatory subunit of serine/threonine-protein phosphatase 4. The polypeptide is Serine/threonine-protein phosphatase 4 regulatory subunit 3 (smek1) (Xenopus laevis (African clawed frog)).